The sequence spans 113 residues: Protein RALF-like 31 (113 aa).

The N-terminal stretch at 1–21 is a signal peptide; it reads MFNSTALVIFAILFLLISADA. Positions 22–58 are cleaved as a propeptide — removed in mature form; the sequence is FPIPSPNGEIDAMLIRNSIIGEDEDLMPTEISRRVLM. 2 disulfides stabilise this stretch: Cys-76–Cys-86 and Cys-98–Cys-104.

It belongs to the plant rapid alkalinization factor (RALF) family. Post-translationally, proteolytically cleaved, probably by S1P, a subtilisin-like serine protease (subtilase).

It localises to the secreted. Its function is as follows. Cell signaling peptide that may regulate plant stress, growth, and development. Mediates a rapid alkalinization of extracellular space by mediating a transient increase in the cytoplasmic Ca(2+) concentration leading to a calcium-dependent signaling events through a cell surface receptor and a concomitant activation of some intracellular mitogen-activated protein kinases. This Arabidopsis thaliana (Mouse-ear cress) protein is Protein RALF-like 31 (RALFL31).